The primary structure comprises 504 residues: MEKFQGYLEFDGARQQSFLYPLFFREYIYVLAYDHGLNRLNRNRSIFLENTDYDKKYSSLIVKRLILRMYEQNRLIIPTKDLNQNSFLGHTSLFYYQMISVLFAVIVEIPFSLRLGSSFQGKQLKKSYNLQSIHSIFPFLEDKLAHFNYVLDVLIPYPIHLEILVQILRYWVKDASSLHFFRFCLYEYCNCKNFYIKKKSILNPRFFLFLYNSHVCEYESIFFFLRKRSSHLRSPSYEVLFERIFFYGKIQHFFKVFINNFPAILGLLKDPFIHYVRYHGRCILATKDTPLLMNKWKYFFVNLWQCYFSVWFQSQKVNINQLSKDNLEFLGYLSSLRLNPLVVRSQMLENSFLIDNVRIKLDSKIPISSIIGSLAKDKFCNVLGHPISKATWTDSSDSDILNRFVRICRNISHYYSGSSKKKNLYRIKYILRLCCVKTLARKHKSTVRAFLKRLGSGLLEEFLTGEDQVLSLIFPRSYYASKRLYRVRIWYLDILYLNDLVNNE.

The protein belongs to the intron maturase 2 family. MatK subfamily.

It is found in the plastid. The protein localises to the chloroplast. Its function is as follows. Usually encoded in the trnK tRNA gene intron. Probably assists in splicing its own and other chloroplast group II introns. The protein is Maturase K of Arabidopsis halleri.